Reading from the N-terminus, the 209-residue chain is Small ribosomal subunit protein uS4 (209 aa).

An S4 RNA-binding domain is found at 98–166; sequence RRLDNVVYRL…IKQAIELNKG (69 aa).

It belongs to the universal ribosomal protein uS4 family. Part of the 30S ribosomal subunit. Contacts protein S5. The interaction surface between S4 and S5 is involved in control of translational fidelity.

In terms of biological role, one of the primary rRNA binding proteins, it binds directly to 16S rRNA where it nucleates assembly of the body of the 30S subunit. Its function is as follows. With S5 and S12 plays an important role in translational accuracy. This chain is Small ribosomal subunit protein uS4, found in Fervidobacterium nodosum (strain ATCC 35602 / DSM 5306 / Rt17-B1).